The chain runs to 147 residues: Hemoglobin subunit beta (147 aa).

Positions 2–147 (HWEDAEKQYI…ISHSLGREYH (146 aa)) constitute a Globin domain. Residues H63 and H92 each contribute to the heme b site.

It belongs to the globin family. As to quaternary structure, heterotetramer of two alpha chains and two beta chains. As to expression, red blood cells.

Functionally, involved in oxygen transport from the lung to the various peripheral tissues. The protein is Hemoglobin subunit beta (HBB) of Lepidosiren paradoxus (South American lungfish).